The sequence spans 200 residues: Glycerol-3-phosphate acyltransferase (200 aa).

Transmembrane regions (helical) follow at residues 4–24, 53–73, 80–100, 115–135, and 138–158; these read FALC…AVIV, WAAL…VWCG, QFEL…PIFF, IAPI…LVFV, and GYSS…VWWF.

Belongs to the PlsY family. As to quaternary structure, probably interacts with PlsX.

The protein localises to the cell inner membrane. It catalyses the reaction an acyl phosphate + sn-glycerol 3-phosphate = a 1-acyl-sn-glycero-3-phosphate + phosphate. It functions in the pathway lipid metabolism; phospholipid metabolism. Its function is as follows. Catalyzes the transfer of an acyl group from acyl-phosphate (acyl-PO(4)) to glycerol-3-phosphate (G3P) to form lysophosphatidic acid (LPA). This enzyme utilizes acyl-phosphate as fatty acyl donor, but not acyl-CoA or acyl-ACP. This chain is Glycerol-3-phosphate acyltransferase, found in Actinobacillus succinogenes (strain ATCC 55618 / DSM 22257 / CCUG 43843 / 130Z).